The chain runs to 120 residues: Large ribosomal subunit protein bL21 (120 aa).

It belongs to the bacterial ribosomal protein bL21 family. In terms of assembly, part of the 50S ribosomal subunit. Contacts protein L20.

Its function is as follows. This protein binds to 23S rRNA in the presence of protein L20. The polypeptide is Large ribosomal subunit protein bL21 (Roseiflexus castenholzii (strain DSM 13941 / HLO8)).